Here is a 348-residue protein sequence, read N- to C-terminus: Putative methylthioribose-1-phosphate isomerase (348 aa).

Substrate is bound by residues 55 to 57 (RGA), Arg98, and Gln203. Asp244 acts as the Proton donor in catalysis. 253–254 (NK) serves as a coordination point for substrate.

It belongs to the eIF-2B alpha/beta/delta subunits family. MtnA subfamily.

It catalyses the reaction 5-(methylsulfanyl)-alpha-D-ribose 1-phosphate = 5-(methylsulfanyl)-D-ribulose 1-phosphate. Functionally, catalyzes the interconversion of methylthioribose-1-phosphate (MTR-1-P) into methylthioribulose-1-phosphate (MTRu-1-P). This is Putative methylthioribose-1-phosphate isomerase from Methanosarcina acetivorans (strain ATCC 35395 / DSM 2834 / JCM 12185 / C2A).